The chain runs to 64 residues: Large ribosomal subunit protein bL35 (64 aa).

The segment at 1–20 is disordered; it reads MKQKTHKGTAKRIKVTGSGK.

It belongs to the bacterial ribosomal protein bL35 family.

The polypeptide is Large ribosomal subunit protein bL35 (Corynebacterium urealyticum (strain ATCC 43042 / DSM 7109)).